Reading from the N-terminus, the 207-residue chain is MTELEYKQPLRIGVGGPVGSGKTALLEVLCKALRNKYQIAVVTNDIYTQEDAKILTRAEALDADRIIGVETGGCPHTAIREDASMNLAAVEELAKRHKNLDVVFVESGGDNLSATFSPELADLTIYVIDVAEGEKIPRKGGPGITRSDLLIINKIDLAPYVGASLVVMDQDTKRMRPEKPYIFTNMKTGKGVPEILTFIETAGMLNI.

16 to 23 (GPVGSGKT) is a binding site for GTP.

Belongs to the SIMIBI class G3E GTPase family. UreG subfamily. As to quaternary structure, homodimer. UreD, UreF and UreG form a complex that acts as a GTP-hydrolysis-dependent molecular chaperone, activating the urease apoprotein by helping to assemble the nickel containing metallocenter of UreC. The UreE protein probably delivers the nickel.

The protein resides in the cytoplasm. Functionally, facilitates the functional incorporation of the urease nickel metallocenter. This process requires GTP hydrolysis, probably effectuated by UreG. This Shewanella halifaxensis (strain HAW-EB4) protein is Urease accessory protein UreG.